The primary structure comprises 410 residues: Magnesium transporter NIPA3 (410 aa).

Over 1 to 67 (MGAQVRLPPG…ISANVENKYS (67 aa)) the chain is Extracellular. N-linked (GlcNAc...) asparagine glycosylation is found at asparagine 25, asparagine 35, and asparagine 50. A helical transmembrane segment spans residues 68–88 (LYVGLVLAVSSSIFIGSSFIL). The Cytoplasmic portion of the chain corresponds to 89 to 114 (KKKGLLQLASKGITRAGQGGHSYLKE). A helical transmembrane segment spans residues 115–135 (WLWWVGLLSMGVGEAANFAAY). Residue alanine 136 is a topological domain, extracellular. The chain crosses the membrane as a helical span at residues 137–157 (FAPATLVTPLGALSVLISAIL). Residues 158 to 165 (SSYFLNEH) are Cytoplasmic-facing. Residues 166–186 (LNIHGKIGCILSILGSTVMVI) traverse the membrane as a helical segment. Over 187 to 207 (HAPQEEEVTSLHEMEMKLRDP) the chain is Extracellular. The helical transmembrane segment at 208–228 (GFISFAVIVTVISLVLILIVA) threads the bilayer. Topologically, residues 229–233 (PKKGQ) are cytoplasmic. A helical transmembrane segment spans residues 234–254 (TNILVYISICSLIGAFSVSSV). The Extracellular segment spans residues 255–273 (KGLGIAIKELIEWKPVYKH). The helical transmembrane segment at 274-294 (PLVFVLLAVLVLSVTTQINYL) threads the bilayer. Over 295–304 (NKALDTFNTS) the chain is Cytoplasmic. A helical membrane pass occupies residues 305-325 (IVTPIYYVFFTSMVVTCSAIL). Over 326–336 (FQEWYGMTAGD) the chain is Extracellular. A helical membrane pass occupies residues 337–357 (IIGTLSGFFTIIIGIFLLHAF). Residues 358 to 410 (KNTDITWSELTSTAKKEAVSLNVSENNYVLLENLECSAPGYNDDVTLFSRTDD) lie on the Cytoplasmic side of the membrane.

The protein belongs to the NIPA family.

It is found in the golgi apparatus membrane. The enzyme catalyses Mg(2+)(in) = Mg(2+)(out). In terms of biological role, acts as a Mg(2+) transporter. Can also transport other divalent cations such as Fe(2+), Sr(2+), Ba(2+), Mn(2+), Cu(2+) and Co(2+) but to a much less extent than Mg(2+). This is Magnesium transporter NIPA3 (NIPAL1) from Pongo abelii (Sumatran orangutan).